Reading from the N-terminus, the 1072-residue chain is DNA-directed RNA polymerase subunit beta (1072 aa).

It belongs to the RNA polymerase beta chain family. In terms of assembly, in plastids the minimal PEP RNA polymerase catalytic core is composed of four subunits: alpha, beta, beta', and beta''. When a (nuclear-encoded) sigma factor is associated with the core the holoenzyme is formed, which can initiate transcription.

The protein resides in the plastid. It is found in the chloroplast. It catalyses the reaction RNA(n) + a ribonucleoside 5'-triphosphate = RNA(n+1) + diphosphate. Functionally, DNA-dependent RNA polymerase catalyzes the transcription of DNA into RNA using the four ribonucleoside triphosphates as substrates. This is DNA-directed RNA polymerase subunit beta from Amborella trichopoda.